Consider the following 814-residue polypeptide: MAVQRAASPRRPPAPLWPRLLLPLLLLLLPAPSEGLGHSAELAFAVEPSDDVAVPGQPIVLDCRVEGTPPVRITWRKNGVELPESTHSTLLANGSLMIRHFRLEPGGSPSDEGDYECVAQNRFGLVVSRKARIQAATMSDFHVHPQATVGEEGGVARFQCQIHGLPKPLITWEKNRVPIDTDNERYTLLPKGVLQITGLRAEDGGIFHCVASNIASIRISHGARLTVSGSGSGAYKEPAILVGPENLTLTVHQTAVLECVATGNPRPIVSWSRLDGRPIGVEGIQVLGTGNLIISDVTVQHSGVYVCAANRPGTRVRRTAQGRLVVQAPAEFVQHPQSISRPAGTTAMFTCQAQGEPPPHVTWLKNGQVLGPGGHVRLKNNNSTLTISGIGPEDEAIYQCVAENSAGSSQASARLTVLWAEGLPGPPRNVRAVSVSSTEVRVSWSEPLANTKEIIGYVLHIRKAADPPELEYQEAVSKSTFQHLVSDLEPSTAYSFYIKAYTPRGASSASVPTLASTLGEAPAPPPLSVRVLGSSSLQLLWEPWPRLAQHEGGFKLFYRPASKTSFTGPILLPGTVSSYNLSQLDPTAVYEVKLLAYNQHGDGNATVRFVSLRGASERTALSPPCDCRKEEAANQTSTTGIVIGIHIGVTCIIFCVLFLLFGQRGRVLLCKDVENQLSPPQGPRSQRDPGILALNGARRGQRGQLGRDEKRVDMKELEQLFPPASAAGQPDPRPTQDPAAPAPCEETQLSVLPLQGCGLMEGKTTEAKTTEATAPCAGLAAAPPPPDGGPGLLSEGQASRPAAARVTQPAHSEQ.

The signal sequence occupies residues 1 to 35 (MAVQRAASPRRPPAPLWPRLLLPLLLLLLPAPSEG). Ig-like C2-type domains follow at residues 36-139 (LGHS…ATMS), 140-220 (DFHV…IRIS), 238-321 (PAIL…RTAQ), and 329-416 (PAEF…ARLT). Cystine bridges form between Cys-63/Cys-117 and Cys-160/Cys-209. An N-linked (GlcNAc...) asparagine glycan is attached at Asn-93. Asn-246 carries N-linked (GlcNAc...) asparagine glycosylation. Disulfide bonds link Cys-259/Cys-307 and Cys-351/Cys-400. Asn-381 and Asn-382 each carry an N-linked (GlcNAc...) asparagine glycan. Fibronectin type-III domains lie at 426–520 (PPRN…TLGE) and 523–618 (APPP…ASER). Residues Asn-580, Asn-604, and Asn-634 are each glycosylated (N-linked (GlcNAc...) asparagine). A helical transmembrane segment spans residues 641–661 (IVIGIHIGVTCIIFCVLFLLF). Disordered regions lie at residues 722–743 (PPAS…APAP) and 762–814 (GKTT…HSEQ). Positions 770–781 (TEATAPCAGLAA) are enriched in low complexity.

It belongs to the immunoglobulin superfamily. DCC family.

Its subcellular location is the membrane. The polypeptide is Immunoglobulin superfamily DCC subclass member 3 (IGDCC3) (Homo sapiens (Human)).